A 576-amino-acid polypeptide reads, in one-letter code: K(+)/H(+) antiporter NhaP2 (576 aa).

The next 13 helical transmembrane spans lie at 6-26 (INSF…LSPM), 34-54 (ILLI…GGIL), 58-78 (YSTA…DGGM), 87-107 (VALW…TSIT), 109-129 (MMAA…GAIV), 163-183 (PMAV…DTEM), 185-205 (FSFM…LGLG), 219-239 (LADG…YAAS), 242-262 (LGGS…NKPT), 271-291 (VLDG…GLLL), 299-319 (ILIP…PVAV), 335-355 (WFIS…VFPM), and 359-379 (LPGA…SLLV). An RCK C-terminal domain is found at 405 to 486 (SGVEIYPSSE…LEALSNLFSQ (82 aa)).

It belongs to the monovalent cation:proton antiporter 1 (CPA1) transporter (TC 2.A.36) family. NhaP2 subfamily.

It localises to the cell inner membrane. The enzyme catalyses K(+)(in) + H(+)(out) = K(+)(out) + H(+)(in). K(+)/H(+) antiporter that extrudes potassium in exchange for external protons and maintains the internal concentration of potassium under toxic levels. This Shewanella baltica (strain OS195) protein is K(+)/H(+) antiporter NhaP2.